The primary structure comprises 158 residues: Glutathione peroxidase-like peroxiredoxin gpx1 (158 aa).

Cys-36 functions as the Cysteine sulfenic acid (-SOH) intermediate in the catalytic mechanism. Cysteines 36 and 82 form a disulfide.

Belongs to the glutathione peroxidase family. Monomer.

It localises to the cytoplasm. It is found in the mitochondrion. It carries out the reaction a hydroperoxide + [thioredoxin]-dithiol = an alcohol + [thioredoxin]-disulfide + H2O. Functionally, glutathione peroxidase-like protein that protects cells during oxidative stress. Has peroxidase activity reducing hydrogen peroxide, alkyl and phospholipid hydroperoxides using preferentially thioredoxin as a reducing power. May act as a scavenger of H(2)O(2). This is Glutathione peroxidase-like peroxiredoxin gpx1 from Schizosaccharomyces pombe (strain 972 / ATCC 24843) (Fission yeast).